Reading from the N-terminus, the 322-residue chain is N-acetyl-gamma-glutamyl-phosphate reductase (322 aa).

Cys117 is an active-site residue.

The protein belongs to the NAGSA dehydrogenase family. Type 2 subfamily.

It localises to the cytoplasm. The catalysed reaction is N-acetyl-L-glutamate 5-semialdehyde + phosphate + NADP(+) = N-acetyl-L-glutamyl 5-phosphate + NADPH + H(+). It functions in the pathway amino-acid biosynthesis; L-arginine biosynthesis; N(2)-acetyl-L-ornithine from L-glutamate: step 3/4. In terms of biological role, catalyzes the NADPH-dependent reduction of N-acetyl-5-glutamyl phosphate to yield N-acetyl-L-glutamate 5-semialdehyde. This Trichormus variabilis (strain ATCC 29413 / PCC 7937) (Anabaena variabilis) protein is N-acetyl-gamma-glutamyl-phosphate reductase.